The sequence spans 91 residues: Acylphosphatase (91 aa).

The 89-residue stretch at 3 to 91 (HIKVNVKGQV…TELTKFEVKY (89 aa)) folds into the Acylphosphatase-like domain. Catalysis depends on residues arginine 18 and asparagine 36.

Belongs to the acylphosphatase family.

The catalysed reaction is an acyl phosphate + H2O = a carboxylate + phosphate + H(+). In Oceanobacillus iheyensis (strain DSM 14371 / CIP 107618 / JCM 11309 / KCTC 3954 / HTE831), this protein is Acylphosphatase (acyP).